The sequence spans 254 residues: UPF0246 protein FTW_0267 (254 aa).

It belongs to the UPF0246 family.

The polypeptide is UPF0246 protein FTW_0267 (Francisella tularensis subsp. tularensis (strain WY96-3418)).